Consider the following 238-residue polypeptide: Ribonuclease 3 (238 aa).

One can recognise an RNase III domain in the interval 10 to 139; it reads FKQFQEQTGI…FIGALYLDQG (130 aa). Glutamate 52 serves as a coordination point for Mg(2+). The active site involves aspartate 56. Residues aspartate 125 and glutamate 128 each contribute to the Mg(2+) site. Glutamate 128 is an active-site residue. Residues 165–234 enclose the DRBM domain; the sequence is DYKSQLQEFV…AQMALAKLKQ (70 aa).

It belongs to the ribonuclease III family. In terms of assembly, homodimer. The cofactor is Mg(2+).

The protein resides in the cytoplasm. It catalyses the reaction Endonucleolytic cleavage to 5'-phosphomonoester.. Functionally, digests double-stranded RNA. Involved in the processing of primary rRNA transcript to yield the immediate precursors to the large and small rRNAs (23S and 16S). Processes some mRNAs, and tRNAs when they are encoded in the rRNA operon. Processes pre-crRNA and tracrRNA of type II CRISPR loci if present in the organism. The polypeptide is Ribonuclease 3 (Anoxybacillus flavithermus (strain DSM 21510 / WK1)).